We begin with the raw amino-acid sequence, 259 residues long: Methionine aminopeptidase (259 aa).

Position 78 (His-78) interacts with substrate. A divalent metal cation contacts are provided by Asp-95, Asp-106, and His-169. Residue His-176 coordinates substrate. Residue Glu-202 coordinates a divalent metal cation. Trp-220 lines the substrate pocket. Residue Glu-234 participates in a divalent metal cation binding.

The protein belongs to the peptidase M24A family. Methionine aminopeptidase type 1 subfamily. In terms of assembly, monomer. Co(2+) is required as a cofactor. It depends on Zn(2+) as a cofactor. Requires Mn(2+) as cofactor. The cofactor is Fe(2+).

It carries out the reaction Release of N-terminal amino acids, preferentially methionine, from peptides and arylamides.. Removes the N-terminal methionine from nascent proteins. The N-terminal methionine is often cleaved when the second residue in the primary sequence is small and uncharged (Met-Ala-, Cys, Gly, Pro, Ser, Thr, or Val). Requires deformylation of the N(alpha)-formylated initiator methionine before it can be hydrolyzed. The sequence is that of Methionine aminopeptidase from Rickettsia prowazekii (strain Madrid E).